The sequence spans 278 residues: Elongation factor Ts (278 aa).

Positions 82–85 (TEPV) are involved in Mg(2+) ion dislocation from EF-Tu.

The protein belongs to the EF-Ts family.

The protein localises to the cytoplasm. Its function is as follows. Associates with the EF-Tu.GDP complex and induces the exchange of GDP to GTP. It remains bound to the aminoacyl-tRNA.EF-Tu.GTP complex up to the GTP hydrolysis stage on the ribosome. The chain is Elongation factor Ts from Cytophaga hutchinsonii (strain ATCC 33406 / DSM 1761 / CIP 103989 / NBRC 15051 / NCIMB 9469 / D465).